A 460-amino-acid chain; its full sequence is Endoglucanase 2 (460 aa).

An N-terminal signal peptide occupies residues Met1–Ala32. Glu99 functions as the Proton donor in the catalytic mechanism. The Nucleophile role is filled by Asp155. Positions Gln400–Asn460 constitute a Dockerin domain.

It belongs to the glycosyl hydrolase 8 (cellulase D) family.

It carries out the reaction Endohydrolysis of (1-&gt;4)-beta-D-glucosidic linkages in cellulose, lichenin and cereal beta-D-glucans.. This Ruminiclostridium josui (Clostridium josui) protein is Endoglucanase 2 (celB).